The sequence spans 456 residues: Signal recognition particle receptor FtsY (456 aa).

Over residues 1 to 26 the composition is skewed to basic and acidic residues; the sequence is MFDGLKKKLNRFRNDVEETAEEKAEA. A disordered region spans residues 1–163; it reads MFDGLKKKLN…DEDDSSGPGR (163 aa). The span at 27-39 shows a compositional bias: acidic residues; that stretch reads AADEAESDADAEA. Low complexity predominate over residues 40-62; sequence ESAPADTDNAAVEPEASEPAAAD. Positions 63–81 are enriched in acidic residues; the sequence is PDADAVGDADAGSEADAVD. Residues 82-97 show a composition bias toward low complexity; that stretch reads AADAPADAESSSAAVE. Over residues 112–134 the composition is skewed to acidic residues; that stretch reads PDSEVDAGADTGDEPSGEPTADE. Residues 265–272, 347–351, and 405–408 contribute to the GTP site; these read GINGVGKT, DTAGR, and TKAD.

It belongs to the GTP-binding SRP family. FtsY subfamily. In terms of assembly, part of the signal recognition particle protein translocation system, which is composed of SRP and FtsY.

The protein resides in the cell membrane. The protein localises to the cytoplasm. It carries out the reaction GTP + H2O = GDP + phosphate + H(+). Its function is as follows. Involved in targeting and insertion of nascent membrane proteins into the cytoplasmic membrane. Acts as a receptor for the complex formed by the signal recognition particle (SRP) and the ribosome-nascent chain (RNC). The chain is Signal recognition particle receptor FtsY from Haloferax volcanii (strain ATCC 29605 / DSM 3757 / JCM 8879 / NBRC 14742 / NCIMB 2012 / VKM B-1768 / DS2) (Halobacterium volcanii).